Consider the following 170-residue polypeptide: Fluoride-specific ion channel FluC 2 (170 aa).

4 helical membrane-spanning segments follow: residues 8-28 (ALVF…TVWI), 55-75 (IALL…VGMI), 84-104 (TFWG…AAAV), and 114-134 (ILIG…AAAM). Na(+) is bound by residues glycine 92 and threonine 95.

Belongs to the fluoride channel Fluc/FEX (TC 1.A.43) family.

Its subcellular location is the cell membrane. The catalysed reaction is fluoride(in) = fluoride(out). Its activity is regulated as follows. Na(+) is not transported, but it plays an essential structural role and its presence is essential for fluoride channel function. Functionally, fluoride-specific ion channel. Important for reducing fluoride concentration in the cell, thus reducing its toxicity. The chain is Fluoride-specific ion channel FluC 2 from Corynebacterium jeikeium (strain K411).